The following is a 372-amino-acid chain: MIFPWKCQSTQRDLCNIFKLWGWTMLCCDFLAHHGTDCWTYHYSEKPMNWQRARRFCRENYTDLVAIQNKAEIEYLEKTLPFSRSYYWIGIRKIGGIWTWVGTNKSLTEEAENWGDGEPNNKKNKEDCVEIYIKRNKDAGKWNDDACHKLKAALCYTASCQPWSCSGHGECVEIINNYTCNCDVGYYGPQCQFVIQCEPLEAPELGTMDCTHPLGNFSFSSQCAFNCSEGTNLTGIEETTCGPFGNWSSPEPTCQVIQCEPLSAPDLGIMNCSHPLASFSFTSACTFICSEGTELIGKKKTICESSGIWSNPSPICQKLDKSFSMIKEGDYNPLFIPVAVMVTAFSGLAFIIWLARRLKKGKKSKKSMDDPY.

An N-terminal signal peptide occupies residues Met-1–Cys-28. The propeptide occupies Asp-29–Cys-38. Residues Trp-39 to Asn-332 lie on the Extracellular side of the membrane. The region spanning Arg-55–Cys-155 is the C-type lectin domain. 10 cysteine pairs are disulfide-bonded: Cys-57–Cys-155, Cys-128–Cys-147, Cys-128–Cys-160, Cys-160–Cys-171, Cys-165–Cys-180, Cys-182–Cys-191, Cys-197–Cys-241, Cys-227–Cys-254, Cys-259–Cys-303, and Cys-289–Cys-316. 2 N-linked (GlcNAc...) asparagine glycosylation sites follow: Asn-60 and Asn-104. Ca(2+)-binding residues include Glu-118, Asn-120, Glu-126, Asn-143, and Asp-144. The 37-residue stretch at Tyr-156 to Gln-192 folds into the EGF-like domain. Residue Asn-177 is glycosylated (N-linked (GlcNAc...) asparagine). Sushi domains are found at residues Ile-195 to Val-256 and Ile-257 to Lys-318. N-linked (GlcNAc...) asparagine glycosylation is found at Asn-216, Asn-226, Asn-232, Asn-246, and Asn-271. The chain crosses the membrane as a helical span at residues Pro-333–Ala-355. The Cytoplasmic segment spans residues Arg-356–Tyr-372.

The protein belongs to the selectin/LECAM family. As to quaternary structure, interaction with SELPLG/PSGL1 and PODXL2 is required for promoting recruitment and rolling of leukocytes. This interaction is dependent on the sialyl Lewis X glycan modification of SELPLG and PODXL2, and tyrosine sulfation modifications of SELPLG. Sulfation on 'Tyr-51' of SELPLG is important for L-selectin binding. Post-translationally, N-glycosylated.

The protein localises to the cell membrane. Functionally, calcium-dependent lectin that mediates cell adhesion by binding to glycoproteins on neighboring cells. Mediates the adherence of lymphocytes to endothelial cells of high endothelial venules in peripheral lymph nodes. Promotes initial tethering and rolling of leukocytes in endothelia. This is L-selectin (SELL) from Pongo pygmaeus (Bornean orangutan).